We begin with the raw amino-acid sequence, 458 residues long: Bifunctional thioredoxin reductase/thioredoxin (458 aa).

The segment at 1 to 321 (MNTTPSAHET…LAEHAGSKAN (321 aa)) is thioredoxin reductase. FAD-binding positions include 19–22 (SGPA), 41–48 (EGTSFGGA), Asn57, and Val90. A disulfide bond links Cys142 and Cys145. Positions 163, 182, 188, 245, and 265 each coordinate NADP(+). FAD is bound by residues Asp285 and 292–295 (RQAI). Arg292 is a binding site for NADP(+). The interval 322–347 (ETTEETGDVDSTDTTDWSTAMTDAKN) is linker. The Thioredoxin domain occupies 341-455 (AMTDAKNAGV…LLRDLSDVVP (115 aa)). Cysteines 379 and 382 form a disulfide.

This sequence in the N-terminal section; belongs to the class-II pyridine nucleotide-disulfide oxidoreductase family. In terms of assembly, homodimer. FAD serves as cofactor.

The protein resides in the cytoplasm. It catalyses the reaction [thioredoxin]-dithiol + NADP(+) = [thioredoxin]-disulfide + NADPH + H(+). This is Bifunctional thioredoxin reductase/thioredoxin (trxB/A) from Mycobacterium leprae (strain TN).